The sequence spans 207 residues: MLSAQLNDYLAEVGLTATEQQKKQLVDFVGMLNKWNKAFNLTSVRDPEQMLIRHIMDSLVVSPHLKGSRFIDVGTGPGLPGIPLAILNPDKEFVLLDSLGKRIRFQKQVQFELGINNISSIESRVEAYQPEELFDGVLSRAFASIQDMLHWCHHLPKADGCFYALKGQLSEDEMAQLPAGFVVTDIFELKVPKLDEQRHLLRVIKQD.

Residues glycine 74, leucine 79, 125 to 126 (VE), and arginine 140 each bind S-adenosyl-L-methionine.

It belongs to the methyltransferase superfamily. RNA methyltransferase RsmG family.

It is found in the cytoplasm. The enzyme catalyses guanosine(527) in 16S rRNA + S-adenosyl-L-methionine = N(7)-methylguanosine(527) in 16S rRNA + S-adenosyl-L-homocysteine. Functionally, specifically methylates the N7 position of guanine in position 527 of 16S rRNA. The protein is Ribosomal RNA small subunit methyltransferase G of Shewanella halifaxensis (strain HAW-EB4).